Consider the following 265-residue polypeptide: Chalcone synthase (265 aa).

The active site involves cysteine 40.

The protein belongs to the thiolase-like superfamily. Chalcone/stilbene synthases family.

It catalyses the reaction (E)-4-coumaroyl-CoA + 3 malonyl-CoA + 3 H(+) = 2',4,4',6'-tetrahydroxychalcone + 3 CO2 + 4 CoA. Its pathway is secondary metabolite biosynthesis; flavonoid biosynthesis. The primary product of this enzyme is 4,2',4',6'-tetrahydroxychalcone (also termed naringenin-chalcone or chalcone) which can under specific conditions spontaneously isomerize into naringenin. In Medicago sativa (Alfalfa), this protein is Chalcone synthase (CHSII).